Here is a 180-residue protein sequence, read N- to C-terminus: MGLTVSAIFSRIFGKKQMRILMVGLDAAGKTTILYKLKLGEIVTTIPTIGFNVETVEYKNICFTVWDVGGQDKIRPLWRHYFQNTQGLIFVVDSNDRERVQESAEELQKMLQEDELRDAVLLVFANKQDMPNAMVVSELTDKLGLQALRSRTWYVQATCATQGTGLYDGLDWLSHELSKR.

Residue glycine 2 is the site of N-myristoyl glycine attachment. Residues 24–31, 67–71, and 126–129 contribute to the GTP site; these read GLDAAGKT, DVGGQ, and NKQD.

This sequence belongs to the small GTPase superfamily. Arf family.

The protein resides in the golgi apparatus. Its function is as follows. GTP-binding protein involved in protein trafficking; may modulate vesicle budding and uncoating within the Golgi apparatus. This is ADP-ribosylation factor 5 (ARF5) from Gallus gallus (Chicken).